The following is a 322-amino-acid chain: uncharacterized protein (322 aa).

Positions 269–289 are disordered; that stretch reads QDEEEEPRDERRPRRRLGKAQ.

This is an uncharacterized protein from Sinorhizobium fredii (strain NBRC 101917 / NGR234).